The chain runs to 414 residues: Na(+)-translocating NADH-quinone reductase subunit B (414 aa).

Helical transmembrane passes span 23–40 (WFALYEAAATLFYTPGLV), 56–76 (IMIMVWFAVFPAMFWGMYNAG), 129–149 (FLPIYATVFLVGGFWEVLFCM), and 164–184 (ILFALIVPPTLPLWQAALGIT). T236 carries the FMN phosphoryl threonine modification. Helical transmembrane passes span 268–288 (IPGSIGEVSTLALLIGAAMIV), 297–317 (IIAGVMIGMIVVSTLFNVIGS), 322–342 (MFSMPWHWHLVLGGFAFGMFF), 358–378 (WWYGILIGAMCVMIRVVNPAY), and 381–401 (GMMLAILFANLFAPLFDHLVV).

Belongs to the NqrB/RnfD family. In terms of assembly, composed of six subunits; NqrA, NqrB, NqrC, NqrD, NqrE and NqrF. Requires FMN as cofactor.

The protein resides in the cell inner membrane. The enzyme catalyses a ubiquinone + n Na(+)(in) + NADH + H(+) = a ubiquinol + n Na(+)(out) + NAD(+). NQR complex catalyzes the reduction of ubiquinone-1 to ubiquinol by two successive reactions, coupled with the transport of Na(+) ions from the cytoplasm to the periplasm. NqrA to NqrE are probably involved in the second step, the conversion of ubisemiquinone to ubiquinol. The protein is Na(+)-translocating NADH-quinone reductase subunit B of Vibrio vulnificus (strain CMCP6).